Consider the following 358-residue polypeptide: MPPTKRFRIQAKNIFLTYPQCSLSKEEALEQIQGIQLSSNKKYIKIARELHEDGQPHLHVLLQLEGKVQITNIRLFDLVSPTRSAHFHPNIQGAKSSSDVKSYVDKDGDTIEWGEFQIDGRSARGGQQTANDSYAKALNATSLEQALQILKEEQPKDYFLQHHNLLNNAQKIFQRAPDPWTPLFPLSSFTNVPEEMQEWADAYFGVDAAARPLRYNSIIVEGDSRTGKTMWARSLGAHNYITGHLDFSLRTYYDEVEYNVIDDVDPTYLKMKHWKHLIGAQKEWQTNLKYGKPRVIKGGIPCIILCNPGPESSYQQFLEKPENEALKSWTLHNSTFCKLQGPLFNNQAAASSQGDSTL.

A CRESS-DNA virus Rep endonuclease domain is found at 8-116 (RIQAKNIFLT…DGDTIEWGEF (109 aa)). The RCR-1 signature appears at 15–18 (FLTY). 3 residues coordinate a divalent metal cation: Glu-49, His-57, and His-59. The RCR-2 motif lies at 57 to 59 (HLH). Tyr-103 serves as the catalytic For DNA cleavage activity. Residues 103–106 (YVDK) carry the RCR-3 motif. A divalent metal cation is bound at residue Asp-107. The binding to RBR1 stretch occupies residues 143–153 (LEQALQILKEE). The interval 156–176 (KDYFLQHHNLLNNAQKIFQRA) is oligomerization. An ATP-binding site is contributed by 222–229 (GDSRTGKT).

This sequence belongs to the geminiviridae Rep protein family. Homooligomer. Interacts with the replication enhancer protein (REn). Interacts with host retinoblastoma-related protein 1 (RBR1), and may thereby induce the transcription of host replicative enzymes even if the cell is not dividing anymore. Interacts with host PCNA. Interacts with host SCE1 protein. The cofactor is Mg(2+). Requires Mn(2+) as cofactor.

It localises to the host nucleus. Essential for the replication of viral ssDNA. The closed circular ssDNA genome is first converted to a superhelical dsDNA. Rep binds a specific region at the genome origin of replication. It introduces an endonucleolytic nick within the conserved sequence 5'-TAATATTAC-3' in the intergenic region of the genome present in all geminiviruses, thereby initiating the rolling circle replication (RCR). Following cleavage, binds covalently to the 5'-phosphate of DNA as a tyrosyl ester. The cleavage gives rise to a free 3'-OH that serves as a primer for the cellular DNA polymerase. The polymerase synthesizes the (+) strand DNA by rolling circle mechanism. After one round of replication, a Rep-catalyzed nucleotidyl transfer reaction releases a circular single-stranded virus genome, thereby terminating the replication. Displays origin-specific DNA cleavage, nucleotidyl transferase, ATPase and helicase activities. In Beet curly top virus (strain California/Logan) (BCTV), this protein is Replication-associated protein.